The chain runs to 199 residues: Protein Maeo_0138 (199 aa).

Positions E7–E197 constitute an AMMECR1 domain.

In Methanococcus aeolicus (strain ATCC BAA-1280 / DSM 17508 / OCM 812 / Nankai-3), this protein is Protein Maeo_0138.